Reading from the N-terminus, the 580-residue chain is Pescadillo homolog (580 aa).

Acidic residues predominate over residues 291 to 303 (EPEEENEVDEFPA). Residues 291–321 (EPEEENEVDEFPADPENAGQEEEQKKQLQEE) form a disordered region. Positions 312–321 (EEQKKQLQEE) are enriched in basic and acidic residues. The BRCT domain maps to 323–416 (KHKSMFVGLK…MLLPVEDYFP (94 aa)). The segment at 448–496 (KGENPEDDDDDDEEDDEDEEEDDEDEDDEENEEEEEDKKLRHLENKKVG) is disordered. Residues 452-483 (PEDDDDDDEEDDEDEEEDDEDEDDEENEEEEE) show a composition bias toward acidic residues. Residues 484–494 (DKKLRHLENKK) are compositionally biased toward basic and acidic residues.

This sequence belongs to the pescadillo family. In terms of assembly, component of the PeBoW complex, composed of bop1, pes1 and wdr12. The complex is held together by bop1, which interacts with pes1 via its N-terminal domain and with wdr12 via a high-affinity interaction between the seven-bladed beta-propeller domains of the 2 proteins. The PeBoW complex associates with the 66S pre-ribosome.

The protein localises to the nucleus. It localises to the nucleolus. Its subcellular location is the nucleoplasm. Component of the PeBoW complex, which is required for maturation of 28S and 5.8S ribosomal RNAs and formation of the 60S ribosome. The chain is Pescadillo homolog (pes1) from Xenopus tropicalis (Western clawed frog).